A 287-amino-acid polypeptide reads, in one-letter code: Glutamate racemase (287 aa).

A compositionally biased stretch (polar residues) spans 1-15 (MATKPQDANTTSREA). The segment at 1-25 (MATKPQDANTTSREAITSKADSPPR) is disordered. Substrate-binding positions include 32 to 33 (DS) and 64 to 65 (YG). Catalysis depends on Cys-96, which acts as the Proton donor/acceptor. A substrate-binding site is contributed by 97 to 98 (NT). The active-site Proton donor/acceptor is Cys-208. Substrate is bound at residue 209-210 (TH).

Belongs to the aspartate/glutamate racemases family.

It carries out the reaction L-glutamate = D-glutamate. The protein operates within cell wall biogenesis; peptidoglycan biosynthesis. Its function is as follows. Provides the (R)-glutamate required for cell wall biosynthesis. In Yersinia pseudotuberculosis serotype I (strain IP32953), this protein is Glutamate racemase.